Here is a 357-residue protein sequence, read N- to C-terminus: Mannonate dehydratase (357 aa).

It belongs to the mannonate dehydratase family. Requires Fe(2+) as cofactor. Mn(2+) is required as a cofactor.

It catalyses the reaction D-mannonate = 2-dehydro-3-deoxy-D-gluconate + H2O. The protein operates within carbohydrate metabolism; pentose and glucuronate interconversion. Its function is as follows. Catalyzes the dehydration of D-mannonate. The polypeptide is Mannonate dehydratase (Enterococcus faecalis (strain ATCC 700802 / V583)).